The following is a 78-amino-acid chain: NAD(P)H-quinone oxidoreductase subunit O (78 aa).

It belongs to the complex I NdhO subunit family. NDH-1 can be composed of about 15 different subunits; different subcomplexes with different compositions have been identified which probably have different functions.

The protein resides in the cell inner membrane. It carries out the reaction a plastoquinone + NADH + (n+1) H(+)(in) = a plastoquinol + NAD(+) + n H(+)(out). The catalysed reaction is a plastoquinone + NADPH + (n+1) H(+)(in) = a plastoquinol + NADP(+) + n H(+)(out). NDH-1 shuttles electrons from an unknown electron donor, via FMN and iron-sulfur (Fe-S) centers, to quinones in the respiratory and/or the photosynthetic chain. The immediate electron acceptor for the enzyme in this species is believed to be plastoquinone. Couples the redox reaction to proton translocation, and thus conserves the redox energy in a proton gradient. Cyanobacterial NDH-1 also plays a role in inorganic carbon-concentration. In Gloeobacter violaceus (strain ATCC 29082 / PCC 7421), this protein is NAD(P)H-quinone oxidoreductase subunit O.